The primary structure comprises 999 residues: MKGLSGSRSHHHVVTCDPSFESMGHHLDHKPYLISQIDNPHPVDHSYYSQRSPYQPDCVVPYGTFPRRHYSSQHELKDEMAVVPYSGGGVPASKGQQRLPVALLDQFDRQLPVPRDGYHTLQYKRAAAALEQRSDSPGRIRHLVHSVQKLFTKSHSLEGPHHGHGHGKGSINGGKASPDGEPPAIRHRKRSKSRERCKSAEPKNRTPPSGYWSSDELEREACLFHHGPPGVMTMGRHPDKSQSQYFLEAYNTINDQALKNSRSNNDLGKCSTCTSIPLSVDASQLVKKSSWSSSLTVSRARQVYQKASVNVDKALVKAEACQQERSCQFLQLWKCVFVELSVCLDADMHVWAKVCDVASLLNRQVPQDEWGGFPLGKDEDIPCRRMRSGSYVKAMAEDDSGDSDGSPKPSPKMQARRASYLKATQPSLTEMTTLKISQEHSPKLQIRSHSYLRAVSEVSINRSLDTLDPKALLASPQYRSRNESYMRAMSTISQIEAMCESVFNEMESHAVDALDLPMPGCFRMRSHSYVRAIDQGCSQDDDSPLLPASPPRTTTTVRTIQSSTVSSCITTYKKTPPPVPPRTSTKPFISITAQSSTESAQDAYMDGPGTRGEPVLHSGLSNSTESIDSMKALTAAIEAANAQIHGPASQHVSNSTMTISTAPPSPLPLPVPVPVPIPIPALEDVRRDVLRKSRCLSIGIQSKFQSVGVQVEEEHGVTTAVQADLDTPDYTPADSPVTDFPAAGCLSRQYSRDAATSTVSIQGSGNHYHACTSDDYEDVGFDPSILPPPDPWIDSVIEDSLEVVGRSVCQRDGRWFLKLLQAETERMEGWCRQMEHDEKENKMPDEVLGKIRGAVGSAQLLMSQKFQQFRELCEENLNPNAHPRPVAQDLAGFWDMLQLSIENISLKFDELHQLKANNWRPLDPPERKERRLPPPVPKKPPKAHPPLARDRSLESTEKQRQEARKRLMAAKRAASVRQNSATESADSIEIYIPEAQTRL.

Disordered stretches follow at residues 155–213, 395–418, and 918–989; these read HSLE…GYWS, MAED…ARRA, and NWRP…DSIE. A compositionally biased stretch (basic and acidic residues) spans 194 to 204; sequence RERCKSAEPKN. Composition is skewed to basic and acidic residues over residues 923 to 932 and 947 to 965; these read DPPERKERRL and LARD…EARK. A compositionally biased stretch (polar residues) spans 976 to 985; that stretch reads VRQNSATESA. Residues 997-999 carry the PDZ-binding motif; it reads TRL.

It belongs to the SAPAP family.

Its subcellular location is the cell membrane. The protein resides in the postsynaptic density. The protein localises to the synapse. In terms of biological role, part of the postsynaptic scaffold in neuronal cells. This chain is Disks large-associated protein 1, found in Danio rerio (Zebrafish).